The chain runs to 439 residues: Capsid vertex component 1 (439 aa).

It belongs to the herpesviridae CVC1 protein family. Interacts (via C-terminus) with capsid vertex component 2/CVC2.

The protein resides in the virion. It localises to the host nucleus. Its function is as follows. Capsid vertex-specific component that plays a role during viral DNA encapsidation, assuring correct genome cleavage and presumably stabilizing capsids that contain full-length viral genomes. This chain is Capsid vertex component 1, found in Homo sapiens (Human).